Here is a 169-residue protein sequence, read N- to C-terminus: Ribosome maturation factor RimM (169 aa).

One can recognise a PRC barrel domain in the interval 96 to 169; it reads DGEYYWADLI…RILVDWGLDY (74 aa).

It belongs to the RimM family. Binds ribosomal protein uS19.

The protein localises to the cytoplasm. Functionally, an accessory protein needed during the final step in the assembly of 30S ribosomal subunit, possibly for assembly of the head region. Essential for efficient processing of 16S rRNA. May be needed both before and after RbfA during the maturation of 16S rRNA. It has affinity for free ribosomal 30S subunits but not for 70S ribosomes. This Chromobacterium violaceum (strain ATCC 12472 / DSM 30191 / JCM 1249 / CCUG 213 / NBRC 12614 / NCIMB 9131 / NCTC 9757 / MK) protein is Ribosome maturation factor RimM.